A 503-amino-acid chain; its full sequence is Na(+)-translocating NADH-quinone reductase subunit B (503 aa).

The next 5 helical transmembrane spans lie at 55–75 (MMLV…NSGV), 94–114 (ISGF…FSIL), 120–140 (IFLP…VLFA), 161–181 (TLPP…GVVV), and 186–206 (FGGT…FLFF). Thr-248 is modified (FMN phosphoryl threonine). The next 5 helical transmembrane spans lie at 361–381 (TSTF…IASW), 387–407 (FGIG…LIVG), 417–437 (FFIP…LVFM), 452–472 (WIYG…NPAY), and 475–495 (GVML…YFAV).

This sequence belongs to the NqrB/RnfD family. In terms of assembly, composed of six subunits; NqrA, NqrB, NqrC, NqrD, NqrE and NqrF. FMN is required as a cofactor.

The protein localises to the cell inner membrane. It carries out the reaction a ubiquinone + n Na(+)(in) + NADH + H(+) = a ubiquinol + n Na(+)(out) + NAD(+). NQR complex catalyzes the reduction of ubiquinone-1 to ubiquinol by two successive reactions, coupled with the transport of Na(+) ions from the cytoplasm to the periplasm. NqrA to NqrE are probably involved in the second step, the conversion of ubisemiquinone to ubiquinol. This is Na(+)-translocating NADH-quinone reductase subunit B from Chlamydia caviae (strain ATCC VR-813 / DSM 19441 / 03DC25 / GPIC) (Chlamydophila caviae).